Reading from the N-terminus, the 486-residue chain is 23S rRNA (uracil(1939)-C(5))-methyltransferase RlmD (486 aa).

Positions Ala-14–Ala-76 constitute a TRAM domain. [4Fe-4S] cluster is bound by residues Cys-89, Cys-99, Cys-102, and Cys-181. S-adenosyl-L-methionine contacts are provided by Gln-289, Phe-318, Asn-323, Glu-339, Asn-374, and Asp-395. The active-site Nucleophile is Cys-442.

This sequence belongs to the class I-like SAM-binding methyltransferase superfamily. RNA M5U methyltransferase family. RlmD subfamily.

It carries out the reaction uridine(1939) in 23S rRNA + S-adenosyl-L-methionine = 5-methyluridine(1939) in 23S rRNA + S-adenosyl-L-homocysteine + H(+). Functionally, catalyzes the formation of 5-methyl-uridine at position 1939 (m5U1939) in 23S rRNA. This Verminephrobacter eiseniae (strain EF01-2) protein is 23S rRNA (uracil(1939)-C(5))-methyltransferase RlmD.